The sequence spans 267 residues: MQSRTTPGAMLTAMREKPPLVQCITNYVAMNIAANVLLAAGASPAMVHAAEEADEFAGIASALTVNIGTLSTQWIDGMQAAAKATTAAGKPWVLDPVAHYATAFRRDAVAGLLALKPTIIRGNASEIIALAGGESRGQGVDSRDPVEQAEGSARWLAERQQAIVAVTGAVDFVTDGERAVRITGGSALMPQVTALGCSLTCLVGAFAATAPEDLFGATVAALATFAIAGEEAALGAAGPGSFAWRFLDALHALDAETLDARARISAA.

Position 46 (methionine 46) interacts with substrate. ATP is bound by residues arginine 121 and threonine 167. Substrate is bound at residue alanine 194.

Belongs to the Thz kinase family. It depends on Mg(2+) as a cofactor.

It carries out the reaction 5-(2-hydroxyethyl)-4-methylthiazole + ATP = 4-methyl-5-(2-phosphooxyethyl)-thiazole + ADP + H(+). Its pathway is cofactor biosynthesis; thiamine diphosphate biosynthesis; 4-methyl-5-(2-phosphoethyl)-thiazole from 5-(2-hydroxyethyl)-4-methylthiazole: step 1/1. Its function is as follows. Catalyzes the phosphorylation of the hydroxyl group of 4-methyl-5-beta-hydroxyethylthiazole (THZ). The protein is Hydroxyethylthiazole kinase of Rhizobium leguminosarum bv. trifolii (strain WSM2304).